The chain runs to 169 residues: Macro domain-containing protein SCO6450 (169 aa).

The Macro domain maps to 1 to 169 (MTGITLVQGD…AYEAFAARLG (169 aa)).

This sequence belongs to the MacroD-type family.

In Streptomyces coelicolor (strain ATCC BAA-471 / A3(2) / M145), this protein is Macro domain-containing protein SCO6450.